Reading from the N-terminus, the 216-residue chain is Elongation factor 1-beta (216 aa).

This sequence belongs to the EF-1-beta/EF-1-delta family. In terms of assembly, EF-1 is composed of 4 subunits: alpha, beta, delta, and gamma. Interacts with actin.

It is found in the cytoplasm. In terms of biological role, EF-1-beta and EF-1-delta stimulate the exchange of GDP bound to EF-1-alpha to GTP. The sequence is that of Elongation factor 1-beta (efa1B) from Dictyostelium discoideum (Social amoeba).